Consider the following 292-residue polypeptide: T-box transcription factor tbx-9 (292 aa).

The T-box DNA-binding region spans 10-194; the sequence is GSQETLWKIF…HNSFAKGFRD (185 aa). 2 disordered regions span residues 192-227 and 265-292; these read FRDGNLSRKRRSPSYSDGSNSQSPSPKSRSPPEVAP and STPSSSSSELSIVKEEDQEVEEDIDIVG. 2 stretches are compositionally biased toward low complexity: residues 204–223 and 265–275; these read PSYSDGSNSQSPSPKSRSPP and STPSSSSSELS. The segment covering 280–292 has biased composition (acidic residues); the sequence is EDQEVEEDIDIVG.

Its subcellular location is the nucleus. Its function is as follows. Transcription factor. Involved in the control of early morphogenesis of the intestine, hypodermis and body-wall muscle. Involved in regulating expression of vab-7. Appears to have partially redundant function to tbx-8. Positively modulates expression of homeobox protein lin-39, perhaps by binding to regulatory regions of the lin-39 gene, acting in the vulval lineage. This chain is T-box transcription factor tbx-9 (tbx-9), found in Caenorhabditis elegans.